A 415-amino-acid chain; its full sequence is Corticotropin-releasing factor receptor 1 (415 aa).

Positions 1-24 (MLLAKTPCLLLVQVIAAGISFALT) are cleaved as a signal peptide. Residues 25–111 (SLQDQCETLQ…CQEILKQEKK (87 aa)) are Extracellular-facing. 3 cysteine pairs are disulfide-bonded: cysteine 30–cysteine 54, cysteine 44–cysteine 87, and cysteine 68–cysteine 102. Residues asparagine 38, asparagine 45, asparagine 78, and asparagine 90 are each glycosylated (N-linked (GlcNAc...) asparagine). A helical membrane pass occupies residues 112–142 (TKVHYHIAIVINFLGHSISLCALLVAFILFL). Residues 143–149 (RLRSIRC) lie on the Cytoplasmic side of the membrane. Residues 150–174 (LRNIIHWNLITAFILRNVTWFVMQL) traverse the membrane as a helical segment. Over 175–189 (TLSHEAHDSNVVWCR) the chain is Extracellular. Cysteine 188 and cysteine 258 form a disulfide bridge. The helical transmembrane segment at 190–218 (LVTIAHNYFYVTNFFWMFGEGCYLHTAIV) threads the bilayer. Residues 219-225 (LTYSTDK) are Cytoplasmic-facing. Residues 226-253 (LRKWMFICIGWCIPFPIIVAWAIGKLYY) traverse the membrane as a helical segment. Topologically, residues 254 to 269 (DNEKCWFGKKAGVYTD) are extracellular. Residues 270–295 (FIYQGPVILVLLINFIFLFNIVRILM) form a helical membrane-spanning segment. The Cytoplasmic segment spans residues 296 to 306 (TKLRASTTSET). A helical transmembrane segment spans residues 307–331 (IQYRKAVKATLVLLPLLGITYMLFF). Over 332 to 338 (VTPGEDE) the chain is Extracellular. The helical transmembrane segment at 339–368 (ISRIVFIYFNSFLQSFQGFFVSVFYCFLNS) threads the bilayer. At 369–415 (EVRSAVRKRWHRWQDKHSIRARVARAMSIPTSPTRISFHSIKQSSAI) the chain is on the cytoplasmic side.

Belongs to the G-protein coupled receptor 2 family. In terms of assembly, interacts (via N-terminal extracellular domain) with CRF and UCN.

Its subcellular location is the cell membrane. Functionally, G-protein coupled receptor for CRH (corticotropin-releasing factor) and UCN (urocortin). Has high affinity for CRH and UCN. Ligand binding causes a conformation change that triggers signaling via guanine nucleotide-binding proteins (G proteins) and down-stream effectors, such as adenylate cyclase. Promotes the activation of adenylate cyclase, leading to increased intracellular cAMP levels. This Xenopus laevis (African clawed frog) protein is Corticotropin-releasing factor receptor 1 (crhr1).